We begin with the raw amino-acid sequence, 890 residues long: DNA mismatch repair protein MutS (890 aa).

646-653 contributes to the ATP binding site; the sequence is GPNMAGKS.

Belongs to the DNA mismatch repair MutS family.

Functionally, this protein is involved in the repair of mismatches in DNA. It is possible that it carries out the mismatch recognition step. This protein has a weak ATPase activity. The chain is DNA mismatch repair protein MutS from Hyphomonas neptunium (strain ATCC 15444).